Consider the following 399-residue polypeptide: Probable peptidoglycan glycosyltransferase FtsW (399 aa).

Residues 1 to 25 are Cytoplasmic-facing; sequence MTAAAPSKPLPRTPRVRQAYPLDYP. A helical transmembrane segment spans residues 26–46; that stretch reads LLLCALGLLAFGWVMVTSASM. Residues 47–64 lie on the Periplasmic side of the membrane; the sequence is SIAEACCQNPFHYSIRHA. Residues 65–85 traverse the membrane as a helical segment; it reads IALGLALMLGLMAYSVPSHWW. Topologically, residues 86–88 are cytoplasmic; that stretch reads ERH. The helical transmembrane segment at 89–109 threads the bilayer; that stretch reads GVWLFLASALVLILVLIPGIG. At 110–117 the chain is on the periplasmic side; the sequence is RTVNGATR. A helical transmembrane segment spans residues 118–138; that stretch reads WIPLGPLNVQPSEFVKLFAIL. Topologically, residues 139–153 are cytoplasmic; it reads YVAGYLVRHADKVVN. A helical transmembrane segment spans residues 154 to 174; the sequence is QLSGFIRPLILIGAAALLILM. The Periplasmic segment spans residues 175–177; that stretch reads QPD. Helical transmembrane passes span 178–198 and 199–219; these read FGTT…GGAS and LLPF…LVIF. At 220-281 the chain is on the periplasmic side; sequence SPYRLERVVS…PEAHTDFLPS (62 aa). The chain crosses the membrane as a helical span at residues 282–302; that stretch reads VIGEELGLAGMLVLIAAFVFL. The Cytoplasmic portion of the chain corresponds to 303–326; that stretch reads SWRAMSIGVRAEALKRPFESYVAQ. Residues 327 to 347 form a helical membrane-spanning segment; it reads GIGLWIGLQSFVNLGVNVGIL. Residues 348–353 lie on the Periplasmic side of the membrane; it reads PTKGLT. Residues 354–374 traverse the membrane as a helical segment; that stretch reads LPFMSYGSNSLMVGCMAVAIL. Residues 375-399 lie on the Cytoplasmic side of the membrane; the sequence is LRIDVMLRRVESEAKFKRGTPWSRA.

The protein belongs to the SEDS family. FtsW subfamily.

Its subcellular location is the cell inner membrane. It catalyses the reaction [GlcNAc-(1-&gt;4)-Mur2Ac(oyl-L-Ala-gamma-D-Glu-L-Lys-D-Ala-D-Ala)](n)-di-trans,octa-cis-undecaprenyl diphosphate + beta-D-GlcNAc-(1-&gt;4)-Mur2Ac(oyl-L-Ala-gamma-D-Glu-L-Lys-D-Ala-D-Ala)-di-trans,octa-cis-undecaprenyl diphosphate = [GlcNAc-(1-&gt;4)-Mur2Ac(oyl-L-Ala-gamma-D-Glu-L-Lys-D-Ala-D-Ala)](n+1)-di-trans,octa-cis-undecaprenyl diphosphate + di-trans,octa-cis-undecaprenyl diphosphate + H(+). The protein operates within cell wall biogenesis; peptidoglycan biosynthesis. In terms of biological role, peptidoglycan polymerase that is essential for cell division. The protein is Probable peptidoglycan glycosyltransferase FtsW of Allochromatium vinosum (strain ATCC 17899 / DSM 180 / NBRC 103801 / NCIMB 10441 / D) (Chromatium vinosum).